We begin with the raw amino-acid sequence, 415 residues long: Tyrosine--tRNA ligase (415 aa).

An L-tyrosine-binding site is contributed by Y33. Positions 38–47 (PSGESLHLGN) match the 'HIGH' region motif. L-tyrosine is bound by residues Y161 and Q165. Positions 225 to 229 (KFGKS) match the 'KMSKS' region motif. ATP is bound at residue K228. The S4 RNA-binding domain occupies 350–414 (MVIDFLLQAK…KKNYFIVVWK (65 aa)).

Belongs to the class-I aminoacyl-tRNA synthetase family. TyrS type 1 subfamily. As to quaternary structure, homodimer.

The protein localises to the cytoplasm. The enzyme catalyses tRNA(Tyr) + L-tyrosine + ATP = L-tyrosyl-tRNA(Tyr) + AMP + diphosphate + H(+). Catalyzes the attachment of tyrosine to tRNA(Tyr) in a two-step reaction: tyrosine is first activated by ATP to form Tyr-AMP and then transferred to the acceptor end of tRNA(Tyr). This Mycoplasmoides gallisepticum (strain R(low / passage 15 / clone 2)) (Mycoplasma gallisepticum) protein is Tyrosine--tRNA ligase.